Reading from the N-terminus, the 511-residue chain is MSAKEVDFERESHLHAVMCFLTGQSGEKIVSIYPHRKPATKAPSKDPQPSSSNPGQCVKPVLTSVKDPSYGFGRVDTEFDMSLGMLAYVFKTQEIACNDGFDMKINNQRFVAYPKTWKARGESTNYQISIVFALKNGCEQHTASAYQTLSNKIAVSLVMLQNYFGFLEREDKWADNAEEPNKDHPLEEFAKTSFIVQPLAEMFEEVRNRGNIHKYLINFVELGFCDEAHALTKLNVVPKGRQEIDEIVRKMKPYHGILLLEDVWPTPDANPIVAKLLSHCSPDRSILDMSTASGIPIFEVFMIIRHLLQWTRAILIYPLCNTNIYTSATSPQPLDKMAEKFTAQFGNTIHLAAGLAHFNPPKTLDTFIRKNLPLHEQGVRAKLVVALLRHQMLMQLHQFYYILKPYSIAILPEPKEPCPAEFTKIIEESTLPNDVKGVVADICAEMLETTSYASVKRTLSLFVKVAPMMDGNHHLEEIKYKNNLDRTEIEGVFVSFKLVIATFRRPDFVAE.

Positions 37 to 58 (KPATKAPSKDPQPSSSNPGQCV) are disordered.

Belongs to the NPR3 family. Probably part of the GATOR complex.

Its subcellular location is the lysosome membrane. In terms of biological role, as a component of the GATOR complex may function in the amino acid-sensing branch of the TORC1 signaling pathway. The polypeptide is GATOR complex protein NPRL3 (nprl-3) (Caenorhabditis elegans).